Consider the following 500-residue polypeptide: MLNINFVNEESSTNQGLVVFIDEQLKLDSNLIGLDQQHHGLISKTIQNKLQFTGKYGQIKVIPSVIKSGEVRYLIIAGLGNEEKLTEAKIEELGGKILQHATGCKISTIGLKLTNRISRFTSQTFASLVASGAFLASYRFDKYRTTLKEAEKFAVESIEIFTDNSTETAKLFEIKKLIAEAVFFTRDISNEPSNIKTPQVYAERIVDILEPLGVDVDVIGEREMKNLGMGALLGVGQGSQNESKLVVMEYKGGSKDASTIALVGKGVIFDTGGISLKPSSNMHLMRYDMGGSAAVVGTIIAVAGQKLPINIVGVVGLVENMPSGNAQRPGDVVTTMSGQTAEVLNTDAEGRLVLADAVWYAQEKFKPKCVIDVATLTGAITVALGNTYAGCFSNNDELADKLIKVGEEVNEKLWRMPLHDEYDAMINSDIADMANIGNVPGAAGSCIAAHFIKRFIKDGVDWAHLDIAGVANSNKASALGPKGAVGYGVRLLEKFIKEYT.

Lysine 265 and aspartate 270 together coordinate Mn(2+). Lysine 277 is an active-site residue. Positions 288, 347, and 349 each coordinate Mn(2+). The active site involves arginine 351.

The protein belongs to the peptidase M17 family. Mn(2+) serves as cofactor.

Its subcellular location is the cytoplasm. The enzyme catalyses Release of an N-terminal amino acid, Xaa-|-Yaa-, in which Xaa is preferably Leu, but may be other amino acids including Pro although not Arg or Lys, and Yaa may be Pro. Amino acid amides and methyl esters are also readily hydrolyzed, but rates on arylamides are exceedingly low.. It carries out the reaction Release of an N-terminal amino acid, preferentially leucine, but not glutamic or aspartic acids.. In terms of biological role, presumably involved in the processing and regular turnover of intracellular proteins. Catalyzes the removal of unsubstituted N-terminal amino acids from various peptides. The chain is Probable cytosol aminopeptidase from Rickettsia massiliae (strain Mtu5).